We begin with the raw amino-acid sequence, 496 residues long: Protein TOO MANY MOUTHS (496 aa).

The first 23 residues, 1-23 (MARYEFFRQIFIVLSIVSPLVRS), serve as a signal peptide directing secretion. At 24–473 (FTVITSDSTA…ATDVSSTSKS (450 aa)) the chain is on the extracellular side. LRR repeat units lie at residues 158–182 (GSSL…LGNL), 183–208 (TNLK…RFSG), 210–228 (RSLD…GFVL), 229–252 (PALS…LTSC), 254–276 (SLIK…INRL), 277–300 (NQLV…LQGL), 302–325 (SLQA…AFKG), 326–350 (LKNL…LTRL), 351–373 (NSLR…EFRD), and 375–401 (KHLS…VWRM). N-linked (GlcNAc...) asparagine glycans are attached at residues asparagine 181 and asparagine 196. A glycan (N-linked (GlcNAc...) asparagine) is linked at asparagine 362. Positions 438–464 (AETSRPAPSGTVQHLSREEDGALPDGA) are disordered. The helical transmembrane segment at 474-494 (LGFSYLSAFFLVFPNFIFMLI) threads the bilayer. Residues 495–496 (SS) are Cytoplasmic-facing.

Belongs to the RLP family. In terms of assembly, forms heterodimer with ERECTA or ERL1 through their extracellular domains. Not able to form homodimer. Interacts with EPF2 but not with EPF1. Interacts with SERK1, SERK2, SERK3/BAK1 and SERK4. Interacts with EPFL9/STOMAGEN. In terms of tissue distribution, in epidermal cells of developing shoots and leaves, but not in roots. Expressed in the stomatal cell lineage in the developing epidermis. Accumulates strongly in meristemoid mother cells (MMC) and meristemoids, somewhat less in meristemoid sister cells (stomatal-lineage ground cells, SLGC), and is barely detected in pavement cells.

The protein resides in the cell membrane. Promotes cell fate progression in stomatal development. In leaves, needed to correctly orient spacing divisions, to limit the number of asymmetric divisions in neighbor cells, and to promote the asymmetric (amplifying) divisions of meristemoids. In stems, promotes the conversion of meristemoids into guard mother cells (GMC). Positively regulates CAPRICE (CPC) expression in differentiating stomaless-forming cell files. Forms constitutive complexes with ERECTA and ERL1 involved in the recognition of the stomatal regulatory peptides EPF1, EPF2 and EPFL9/STOMAGEN. Modulates the activity of the ligand-receptor pairs EPF2-ERECTA and EPF1-ERL1 in stomatal development. Functions in a combinatorial specific manner with the ERECTA-family (ERf) receptor kinases in the regulation of the immune response. This Arabidopsis thaliana (Mouse-ear cress) protein is Protein TOO MANY MOUTHS.